The primary structure comprises 439 residues: Amino-acid acetyltransferase (439 aa).

The region spanning 289–429 (EDIRIATVQD…DHYNYQRRSK (141 aa)) is the N-acetyltransferase domain.

Belongs to the acetyltransferase family. ArgA subfamily.

The protein localises to the cytoplasm. The enzyme catalyses L-glutamate + acetyl-CoA = N-acetyl-L-glutamate + CoA + H(+). It participates in amino-acid biosynthesis; L-arginine biosynthesis; N(2)-acetyl-L-ornithine from L-glutamate: step 1/4. This chain is Amino-acid acetyltransferase, found in Mannheimia succiniciproducens (strain KCTC 0769BP / MBEL55E).